Here is a 419-residue protein sequence, read N- to C-terminus: Maltoporin 2 (419 aa).

Residues 1–23 form the signal peptide; it reads MKTSLRTLSVALAAALVSPSVLA.

It belongs to the porin LamB (TC 1.B.3) family. Homotrimer formed of three 18-stranded antiparallel beta-barrels, containing three independent channels.

It is found in the cell outer membrane. The catalysed reaction is beta-maltose(in) = beta-maltose(out). Its function is as follows. Involved in the transport of maltose and maltodextrins. This is Maltoporin 2 from Yersinia pseudotuberculosis serotype O:1b (strain IP 31758).